Consider the following 360-residue polypeptide: Phospho-N-acetylmuramoyl-pentapeptide-transferase (360 aa).

Helical transmembrane passes span 25–45, 73–93, 97–117, 132–152, 168–188, 199–219, 236–256, 263–283, 288–308, and 338–358; these read RGIL…PWMI, TMGG…WADL, YVWV…VDDY, WKYF…YMTA, VSIP…VGSS, GLAI…CYLS, AGEL…FLWF, VFMG…IAVI, VVLF…IIQV, and VIVR…ATLK.

Belongs to the glycosyltransferase 4 family. MraY subfamily. Requires Mg(2+) as cofactor.

The protein resides in the cell inner membrane. The enzyme catalyses UDP-N-acetyl-alpha-D-muramoyl-L-alanyl-gamma-D-glutamyl-meso-2,6-diaminopimeloyl-D-alanyl-D-alanine + di-trans,octa-cis-undecaprenyl phosphate = di-trans,octa-cis-undecaprenyl diphospho-N-acetyl-alpha-D-muramoyl-L-alanyl-D-glutamyl-meso-2,6-diaminopimeloyl-D-alanyl-D-alanine + UMP. It functions in the pathway cell wall biogenesis; peptidoglycan biosynthesis. In terms of biological role, catalyzes the initial step of the lipid cycle reactions in the biosynthesis of the cell wall peptidoglycan: transfers peptidoglycan precursor phospho-MurNAc-pentapeptide from UDP-MurNAc-pentapeptide onto the lipid carrier undecaprenyl phosphate, yielding undecaprenyl-pyrophosphoryl-MurNAc-pentapeptide, known as lipid I. The sequence is that of Phospho-N-acetylmuramoyl-pentapeptide-transferase from Ectopseudomonas mendocina (strain ymp) (Pseudomonas mendocina).